The chain runs to 144 residues: uncharacterized protein (144 aa).

Transmembrane regions (helical) follow at residues 7–29, 51–73, 85–107, and 122–139; these read FPASVLQIALALFLLASGARDLV, VAIGVLTLAVSLCCLTAGFFLLV, AVLALFVVLWALNMVLVDVVGAF, and HLHHTAVDLLVLGALIFV.

The protein resides in the cell membrane. This is an uncharacterized protein from Treponema pallidum (strain Nichols).